The sequence spans 277 residues: WRKY transcription factor 68 (277 aa).

The segment at 51-96 is disordered; the sequence is TPLMHFPTTPNSSSSEAVNGDDEEEEDGEEQQHKTKKRFKFTKMSR. Residues 58 to 67 are compositionally biased toward polar residues; sequence TTPNSSSSEA. The span at 69-79 shows a compositional bias: acidic residues; it reads NGDDEEEEDGE. The segment covering 84 to 96 has biased composition (basic residues); that stretch reads KTKKRFKFTKMSR. Residues 112–177 constitute a DNA-binding region (WRKY); that stretch reads SEVLHLDDGY…YEGQHTHPRP (66 aa). A disordered region spans residues 183 to 206; sequence KEGSSPSNGSASRAHIGLPTLPPQ.

It belongs to the WRKY group II-c family.

The protein resides in the nucleus. Transcription factor. Interacts specifically with the W box (5'-(T)TGAC[CT]-3'), a frequently occurring elicitor-responsive cis-acting element. The protein is WRKY transcription factor 68 (WRKY68) of Arabidopsis thaliana (Mouse-ear cress).